The sequence spans 657 residues: UvrABC system protein B (657 aa).

In terms of domain architecture, Helicase ATP-binding spans 25-163 (ASIKNGNKYQ…QGMVLFLEIN (139 aa)). 38–45 (GVTGSGKT) contacts ATP. The short motif at 91-114 (YYDYYQPEAYIPRQDLFIEKDSSI) is the Beta-hairpin element. A DEAD box motif is present at residues 130 to 133 (LSFD). A Helicase C-terminal domain is found at 433 to 599 (QVEILYDMAK…SVSRNVEESL (167 aa)). The 36-residue stretch at 622 to 657 (AKIVKDLRKQMMEAADKLEFEKAAALRDEIKKMRKL) folds into the UVR domain.

It belongs to the UvrB family. In terms of assembly, forms a heterotetramer with UvrA during the search for lesions. Interacts with UvrC in an incision complex.

The protein localises to the cytoplasm. Its function is as follows. The UvrABC repair system catalyzes the recognition and processing of DNA lesions. A damage recognition complex composed of 2 UvrA and 2 UvrB subunits scans DNA for abnormalities. Upon binding of the UvrA(2)B(2) complex to a putative damaged site, the DNA wraps around one UvrB monomer. DNA wrap is dependent on ATP binding by UvrB and probably causes local melting of the DNA helix, facilitating insertion of UvrB beta-hairpin between the DNA strands. Then UvrB probes one DNA strand for the presence of a lesion. If a lesion is found the UvrA subunits dissociate and the UvrB-DNA preincision complex is formed. This complex is subsequently bound by UvrC and the second UvrB is released. If no lesion is found, the DNA wraps around the other UvrB subunit that will check the other stand for damage. The chain is UvrABC system protein B from Campylobacter hominis (strain ATCC BAA-381 / DSM 21671 / CCUG 45161 / LMG 19568 / NCTC 13146 / CH001A).